Reading from the N-terminus, the 248-residue chain is 2,3-bisphosphoglycerate-dependent phosphoglycerate mutase (248 aa).

Residues 10–17 (RHGQSEWN), 23–24 (TG), Arg62, 89–92 (ERHY), Lys100, 116–117 (RR), and 183–184 (GN) each bind substrate. Catalysis depends on His11, which acts as the Tele-phosphohistidine intermediate. Residue Glu89 is the Proton donor/acceptor of the active site.

The protein belongs to the phosphoglycerate mutase family. BPG-dependent PGAM subfamily.

It carries out the reaction (2R)-2-phosphoglycerate = (2R)-3-phosphoglycerate. The protein operates within carbohydrate degradation; glycolysis; pyruvate from D-glyceraldehyde 3-phosphate: step 3/5. Its function is as follows. Catalyzes the interconversion of 2-phosphoglycerate and 3-phosphoglycerate. This is 2,3-bisphosphoglycerate-dependent phosphoglycerate mutase from Corynebacterium diphtheriae (strain ATCC 700971 / NCTC 13129 / Biotype gravis).